A 265-amino-acid polypeptide reads, in one-letter code: Apolipoprotein A-I (265 aa).

The signal sequence occupies residues 1–18 (MKAVLLTLAVLFLTGSQA). A run of 2 repeats spans residues 67-88 (LKLL…EQLG) and 89-110 (PVTQ…QEMN). Residues 67–265 (LKLLDNWDSL…DEASKKLNAQ (199 aa)) form a 10 X approximate tandem repeats region. A Methionine sulfoxide modification is found at methionine 109. One copy of the 3; half-length repeat lies at 111–121 (KDLEEVKQKVQ). A run of 5 repeats spans residues 122–142 (PYLD…RQKV), 144–165 (PLGE…DKLT), 166–187 (PLAE…QQLA), 188–209 (PYSD…AGGG), and 210–230 (SLAE…EKAK). The stretch at 231–241 (PALEDLRQGLV) is one 9; half-length repeat. Repeat unit 10 spans residues 242–265 (PVLESLKVSILAAIDEASKKLNAQ).

The protein belongs to the apolipoprotein A1/A4/E family. Homodimer. Interacts with APOA1BP and CLU. Component of a sperm activating protein complex (SPAP), consisting of APOA1, an immunoglobulin heavy chain, an immunoglobulin light chain and albumin. Interacts with NDRG1. Interacts with SCGB3A2. Interacts with NAXE and YJEFN3. Glycosylated. In terms of processing, palmitoylated. Post-translationally, phosphorylation sites are present in the extracellular medium. As to expression, major protein of plasma HDL, also found in chylomicrons.

The protein localises to the secreted. Participates in the reverse transport of cholesterol from tissues to the liver for excretion by promoting cholesterol efflux from tissues and by acting as a cofactor for the lecithin cholesterol acyltransferase (LCAT). As part of the SPAP complex, activates spermatozoa motility. This chain is Apolipoprotein A-I (APOA1), found in Tursiops truncatus (Atlantic bottle-nosed dolphin).